A 246-amino-acid chain; its full sequence is V-type proton ATPase subunit D (246 aa).

The protein belongs to the V-ATPase D subunit family. As to quaternary structure, V-ATPase is a heteromultimeric enzyme made up of two complexes: the ATP-hydrolytic V1 complex and the proton translocation V0 complex. The V1 complex consists of three catalytic AB heterodimers that form a heterohexamer, three peripheral stalks each consisting of EG heterodimers, one central rotor including subunits D and F, and the regulatory subunits C and H. The proton translocation complex V0 consists of the proton transport subunit a, a ring of proteolipid subunits c9c'', rotary subunit d, subunits e and f, and the accessory subunits VhaAC45 and ATP6AP2.

Functionally, subunit of the V1 complex of vacuolar(H+)-ATPase (V-ATPase), a multisubunit enzyme composed of a peripheral complex (V1) that hydrolyzes ATP and a membrane integral complex (V0) that translocates protons. V-ATPase is responsible for acidifying and maintaining the pH of intracellular compartments and in some cell types, is targeted to the plasma membrane, where it is responsible for acidifying the extracellular environment. The chain is V-type proton ATPase subunit D from Manduca sexta (Tobacco hawkmoth).